Reading from the N-terminus, the 135-residue chain is Large ribosomal subunit protein eL32 (135 aa).

The protein belongs to the eukaryotic ribosomal protein eL32 family.

The polypeptide is Large ribosomal subunit protein eL32 (rpl32e) (Methanococcus vannielii).